The sequence spans 198 residues: MKKFLFSLCLLSSTVLASPQSELTERLNQNAGFEAGFTQKVLSPEGDVLMQGEGDVKILRPNLFRWHTQTPDENLLVTDGNTLWYYNPFVEQVTLMGLEKATTQTPFVLLTRNKASDWDNYSVSQNGDAFTVSPKADSAVKSEFIVRIQENGKVTGFSVVEQDGQRSDFDFTKFEAKKPAKDNFTFAIPDGVDIDDQR.

An N-terminal signal peptide occupies residues 1 to 17 (MKKFLFSLCLLSSTVLA).

The protein belongs to the LolA family. In terms of assembly, monomer.

It localises to the periplasm. Functionally, participates in the translocation of lipoproteins from the inner membrane to the outer membrane. Only forms a complex with a lipoprotein if the residue after the N-terminal Cys is not an aspartate (The Asp acts as a targeting signal to indicate that the lipoprotein should stay in the inner membrane). The polypeptide is Outer-membrane lipoprotein carrier protein (Aliivibrio fischeri (strain ATCC 700601 / ES114) (Vibrio fischeri)).